The sequence spans 157 residues: Small ribosomal subunit protein uS7 (157 aa).

Belongs to the universal ribosomal protein uS7 family. Part of the 30S ribosomal subunit. Contacts proteins S9 and S11.

Functionally, one of the primary rRNA binding proteins, it binds directly to 16S rRNA where it nucleates assembly of the head domain of the 30S subunit. Is located at the subunit interface close to the decoding center, probably blocks exit of the E-site tRNA. The sequence is that of Small ribosomal subunit protein uS7 from Chlamydia pneumoniae (Chlamydophila pneumoniae).